The following is a 420-amino-acid chain: Diaminobutyrate--2-oxoglutarate transaminase (420 aa).

Lys-271 carries the N6-(pyridoxal phosphate)lysine modification.

Belongs to the class-III pyridoxal-phosphate-dependent aminotransferase family. Pyridoxal 5'-phosphate is required as a cofactor.

It carries out the reaction L-2,4-diaminobutanoate + 2-oxoglutarate = L-aspartate 4-semialdehyde + L-glutamate. It functions in the pathway amine and polyamine biosynthesis; ectoine biosynthesis; L-ectoine from L-aspartate 4-semialdehyde: step 1/3. In terms of biological role, catalyzes reversively the conversion of L-aspartate beta-semialdehyde (ASA) to L-2,4-diaminobutyrate (DABA) by transamination with L-glutamate. The sequence is that of Diaminobutyrate--2-oxoglutarate transaminase (ectB) from Streptomyces anulatus (Streptomyces chrysomallus).